The primary structure comprises 67 residues: Large ribosomal subunit protein bL35 (67 aa).

It belongs to the bacterial ribosomal protein bL35 family.

The sequence is that of Large ribosomal subunit protein bL35 from Leptothrix cholodnii (strain ATCC 51168 / LMG 8142 / SP-6) (Leptothrix discophora (strain SP-6)).